The chain runs to 565 residues: Probable peptidoglycan D,D-transpeptidase PbpC (565 aa).

A helical transmembrane segment spans residues 10-30 (FILVVTLFVLASLAVSGRLVY). Ser289 functions as the Acyl-ester intermediate in the catalytic mechanism.

The protein belongs to the transpeptidase family. FtsI subfamily.

The protein localises to the cell inner membrane. It carries out the reaction Preferential cleavage: (Ac)2-L-Lys-D-Ala-|-D-Ala. Also transpeptidation of peptidyl-alanyl moieties that are N-acyl substituents of D-alanine.. Its pathway is cell wall biogenesis; peptidoglycan biosynthesis. Catalyzes cross-linking of the peptidoglycan cell wall at the division septum. Binds penicillin. The sequence is that of Probable peptidoglycan D,D-transpeptidase PbpC from Pseudomonas aeruginosa (strain ATCC 15692 / DSM 22644 / CIP 104116 / JCM 14847 / LMG 12228 / 1C / PRS 101 / PAO1).